The sequence spans 143 residues: Adrenodoxin, mitochondrial (143 aa).

The N-terminal 19 residues, 1-19 (CSAVAVRTLRPLSLSARAA), are a transit peptide targeting the mitochondrion. The 2Fe-2S ferredoxin-type domain occupies 26 to 130 (ITVHFINRDG…NMTVRVPEAV (105 aa)). [2Fe-2S] cluster-binding residues include Cys-65, Cys-71, Cys-74, and Cys-111.

Belongs to the adrenodoxin/putidaredoxin family. [2Fe-2S] cluster is required as a cofactor.

It is found in the mitochondrion matrix. Essential for the synthesis of various steroid hormones. Participates in the reduction of mitochondrial cytochrome P450 for steroidogenesis. Transfers electrons from adrenodoxin reductase to CYP11A1, a cytochrome P450 that catalyzes cholesterol side-chain cleavage. Does not form a ternary complex with adrenodoxin reductase and CYP11A1 but shuttles between the two enzymes to transfer electrons. This chain is Adrenodoxin, mitochondrial (FDX1), found in Gallus gallus (Chicken).